Here is a 167-residue protein sequence, read N- to C-terminus: Small ribosomal subunit protein uS9 (167 aa).

2 disordered regions span residues 1-45 (MSEY…GGAT) and 137-167 (KAGF…FSKR). Positions 9-19 (DTVEDITESDE) are enriched in acidic residues. Positions 20 to 36 (FTGTYTSESSTPATGGN) are enriched in polar residues. A compositionally biased stretch (basic and acidic residues) spans 143 to 152 (RDPRATERKK). Residues 153-167 (AGLKKARKAPQFSKR) are compositionally biased toward basic residues.

The protein belongs to the universal ribosomal protein uS9 family.

The protein is Small ribosomal subunit protein uS9 of Kineococcus radiotolerans (strain ATCC BAA-149 / DSM 14245 / SRS30216).